Consider the following 459-residue polypeptide: Asperlicin C monooxygenase (459 aa).

FAD contacts are provided by D49, A62, and R121. R199 is an active-site residue. D323 and A336 together coordinate FAD.

Belongs to the paxM FAD-dependent monooxygenase family. FAD is required as a cofactor.

It catalyses the reaction asperlicin C + NADPH + O2 + H(+) = asperlicin E + NADP(+) + H2O. It carries out the reaction asperlicin C + NADH + O2 + H(+) = asperlicin E + NAD(+) + H2O. Catalyzes the conversion of asperlicin A to form asperlicin E, a potent cholecystokinin receptor CCK(A) antagonist. The polypeptide is Asperlicin C monooxygenase (Petromyces alliaceus (Aspergillus alliaceus)).